The chain runs to 272 residues: 3-methyl-2-oxobutanoate hydroxymethyltransferase (272 aa).

Residues D42 and D86 each contribute to the Mg(2+) site. 3-methyl-2-oxobutanoate contacts are provided by residues 42 to 43, D86, and K116; that span reads DS. Residue E118 coordinates Mg(2+). The active-site Proton acceptor is E185. Residues 251–272 are disordered; the sequence is LKEQRDQRATPTTPPPPPAPDC. Pro residues predominate over residues 262–272; the sequence is TTPPPPPAPDC.

It belongs to the PanB family. Homodecamer; pentamer of dimers. Mg(2+) serves as cofactor.

The protein resides in the cytoplasm. The catalysed reaction is 3-methyl-2-oxobutanoate + (6R)-5,10-methylene-5,6,7,8-tetrahydrofolate + H2O = 2-dehydropantoate + (6S)-5,6,7,8-tetrahydrofolate. It participates in cofactor biosynthesis; (R)-pantothenate biosynthesis; (R)-pantoate from 3-methyl-2-oxobutanoate: step 1/2. Catalyzes the reversible reaction in which hydroxymethyl group from 5,10-methylenetetrahydrofolate is transferred onto alpha-ketoisovalerate to form ketopantoate. This Synechococcus sp. (strain CC9311) protein is 3-methyl-2-oxobutanoate hydroxymethyltransferase.